We begin with the raw amino-acid sequence, 267 residues long: DNA damage-regulated autophagy modulator protein 2 (267 aa).

6 helical membrane passes run 8 to 28 (LSFL…FSYI), 53 to 73 (RCLF…TMYV), 87 to 107 (LIIK…LGLS), 118 to 138 (FIVH…YMFV), 160 to 180 (LLLV…SSIL), and 203 to 223 (VLHL…FGFF).

The protein belongs to the DRAM/TMEM150 family. Expressed in the retina.

It localises to the lysosome membrane. The protein localises to the photoreceptor inner segment. Its subcellular location is the apical cell membrane. Plays a role in the initiation of autophagy. In the retina, might be involved in the process of photoreceptor cells renewal and recycling to preserve visual function. Induces apoptotic cell death when coexpressed with DRAM1. The polypeptide is DNA damage-regulated autophagy modulator protein 2 (Dram2) (Mus musculus (Mouse)).